The primary structure comprises 309 residues: Peptidyl-prolyl cis-trans isomerase 9 (309 aa).

Residues 8–173 (FLDISVDENL…AKVLISNCGE (166 aa)) enclose the PPIase cyclophilin-type domain. 4 stretches are compositionally biased toward basic and acidic residues: residues 217–229 (NEKK…DKRR), 239–265 (RSHE…RDEN), 280–289 (ERSATPEHWR), and 296–309 (WVHD…EDLV). Residues 217–309 (NEKKHEMRND…SHKHPEEDLV (93 aa)) form a disordered region.

This sequence belongs to the cyclophilin-type PPIase family. In terms of tissue distribution, co-expressed with pdi-1 in the syncytial hypodermis.

The catalysed reaction is [protein]-peptidylproline (omega=180) = [protein]-peptidylproline (omega=0). Functionally, PPIases accelerate the folding of proteins. It catalyzes the cis-trans isomerization of proline imidic peptide bonds in oligopeptides. Thought to function as a catalyst in the folding and modification of cuticle collagens. In Caenorhabditis elegans, this protein is Peptidyl-prolyl cis-trans isomerase 9 (cyn-9).